The chain runs to 305 residues: Glycine--tRNA ligase alpha subunit (305 aa).

The protein belongs to the class-II aminoacyl-tRNA synthetase family. As to quaternary structure, tetramer of two alpha and two beta subunits.

It is found in the cytoplasm. It catalyses the reaction tRNA(Gly) + glycine + ATP = glycyl-tRNA(Gly) + AMP + diphosphate. The polypeptide is Glycine--tRNA ligase alpha subunit (Streptococcus thermophilus (strain CNRZ 1066)).